Consider the following 584-residue polypeptide: uncharacterized protein (584 aa).

Disordered stretches follow at residues glutamate 151–leucine 188, lysine 222–asparagine 243, serine 399–phenylalanine 418, and methionine 433–aspartate 584. Residues threonine 159–leucine 188 show a composition bias toward basic and acidic residues. The segment covering leucine 231–asparagine 243 has biased composition (low complexity). Composition is skewed to polar residues over residues serine 399 to glycine 409, methionine 433 to methionine 453, asparagine 483 to proline 500, asparagine 511 to proline 531, and glutamine 572 to aspartate 584.

This is an uncharacterized protein from Schizosaccharomyces pombe (strain 972 / ATCC 24843) (Fission yeast).